The following is a 150-amino-acid chain: Protein-arginine-phosphatase (150 aa).

C7 functions as the Nucleophile in the catalytic mechanism. 8 to 13 (TGNTCR) provides a ligand contact to substrate. Residue R13 is part of the active site. D118 (proton donor/acceptor) is an active-site residue.

This sequence belongs to the low molecular weight phosphotyrosine protein phosphatase family.

It carries out the reaction N(omega)-phospho-L-arginyl-[protein] + H2O = L-arginyl-[protein] + phosphate. Its activity is regulated as follows. Efficiently inhibited by Cu(2+) ion, Zn(2+) ion, sodium pyrophosphate and N-ethylmaleimide, while the addition of Mg(2+), Ca(2+) or Fe(3+) ions has minimal effect. Inhibited in a competitive manner by vanadate. In terms of biological role, catalyzes the specific dephosphorylation of phosphoarginine residues in a large number of proteins. Counteracts the protein arginine kinase McsB in vivo. Can dephosphorylate CtsR-P; thus, can restore the DNA-binding ability of the CtsR repressor by reversing the McsB-mediated phosphorylation. Is the only active pArg phosphatase present in B.subtilis. Exhibits almost no activity against pSer, pThr, or pTyr peptides. Appears to play a role in B.subtilis stress resistance. Protein arginine phosphorylation has a physiologically important role and is involved in the regulation of many critical cellular processes, such as protein homeostasis, motility, competence, and stringent and stress responses, by regulating gene expression and protein activity. The sequence is that of Protein-arginine-phosphatase (ywlE) from Bacillus subtilis (strain 168).